A 176-amino-acid polypeptide reads, in one-letter code: Lipoprotein signal peptidase (176 aa).

4 helical membrane-spanning segments follow: residues 10–30, 48–68, 78–98, and 102–122; these read LFQFYPHNLIWLGLSVLAIVL, VPVLPFLNWTLLHNYGAAFSF, YFFTSLAGLVSILFVFWLLRM, and MVVLPVAIALILGGALGNLID. Active-site residues include Asp131 and Asp149. A helical membrane pass occupies residues 141-161; it reads HFPAFNIADSAITLGTILLLI.

This sequence belongs to the peptidase A8 family.

The protein localises to the cell inner membrane. It carries out the reaction Release of signal peptides from bacterial membrane prolipoproteins. Hydrolyzes -Xaa-Yaa-Zaa-|-(S,diacylglyceryl)Cys-, in which Xaa is hydrophobic (preferably Leu), and Yaa (Ala or Ser) and Zaa (Gly or Ala) have small, neutral side chains.. Its pathway is protein modification; lipoprotein biosynthesis (signal peptide cleavage). Functionally, this protein specifically catalyzes the removal of signal peptides from prolipoproteins. This chain is Lipoprotein signal peptidase, found in Acinetobacter baumannii (strain SDF).